We begin with the raw amino-acid sequence, 289 residues long: Phosphatidylserine decarboxylase proenzyme (289 aa).

Active-site charge relay system; for autoendoproteolytic cleavage activity residues include aspartate 89, histidine 146, and serine 252. Serine 252 acts as the Schiff-base intermediate with substrate; via pyruvic acid; for decarboxylase activity in catalysis. Serine 252 is subject to Pyruvic acid (Ser); by autocatalysis.

It belongs to the phosphatidylserine decarboxylase family. PSD-B subfamily. Prokaryotic type I sub-subfamily. Heterodimer of a large membrane-associated beta subunit and a small pyruvoyl-containing alpha subunit. Pyruvate is required as a cofactor. Post-translationally, is synthesized initially as an inactive proenzyme. Formation of the active enzyme involves a self-maturation process in which the active site pyruvoyl group is generated from an internal serine residue via an autocatalytic post-translational modification. Two non-identical subunits are generated from the proenzyme in this reaction, and the pyruvate is formed at the N-terminus of the alpha chain, which is derived from the carboxyl end of the proenzyme. The autoendoproteolytic cleavage occurs by a canonical serine protease mechanism, in which the side chain hydroxyl group of the serine supplies its oxygen atom to form the C-terminus of the beta chain, while the remainder of the serine residue undergoes an oxidative deamination to produce ammonia and the pyruvoyl prosthetic group on the alpha chain. During this reaction, the Ser that is part of the protease active site of the proenzyme becomes the pyruvoyl prosthetic group, which constitutes an essential element of the active site of the mature decarboxylase.

The protein localises to the cell membrane. The enzyme catalyses a 1,2-diacyl-sn-glycero-3-phospho-L-serine + H(+) = a 1,2-diacyl-sn-glycero-3-phosphoethanolamine + CO2. The protein operates within phospholipid metabolism; phosphatidylethanolamine biosynthesis; phosphatidylethanolamine from CDP-diacylglycerol: step 2/2. Catalyzes the formation of phosphatidylethanolamine (PtdEtn) from phosphatidylserine (PtdSer). This is Phosphatidylserine decarboxylase proenzyme from Shewanella denitrificans (strain OS217 / ATCC BAA-1090 / DSM 15013).